The sequence spans 379 residues: Succinyl-diaminopimelate desuccinylase (379 aa).

His-70 is a Zn(2+) binding site. Asp-72 is an active-site residue. Residue Asp-103 coordinates Zn(2+). Residue Glu-137 is the Proton acceptor of the active site. The Zn(2+) site is built by Glu-138, Glu-166, and His-352.

Belongs to the peptidase M20A family. DapE subfamily. As to quaternary structure, homodimer. The cofactor is Zn(2+). It depends on Co(2+) as a cofactor.

It catalyses the reaction N-succinyl-(2S,6S)-2,6-diaminopimelate + H2O = (2S,6S)-2,6-diaminopimelate + succinate. The protein operates within amino-acid biosynthesis; L-lysine biosynthesis via DAP pathway; LL-2,6-diaminopimelate from (S)-tetrahydrodipicolinate (succinylase route): step 3/3. In terms of biological role, catalyzes the hydrolysis of N-succinyl-L,L-diaminopimelic acid (SDAP), forming succinate and LL-2,6-diaminopimelate (DAP), an intermediate involved in the bacterial biosynthesis of lysine and meso-diaminopimelic acid, an essential component of bacterial cell walls. This is Succinyl-diaminopimelate desuccinylase from Burkholderia multivorans (strain ATCC 17616 / 249).